The following is a 233-amino-acid chain: Cilia- and flagella-associated protein 299 (233 aa).

Abundantly expressed in testis, specifically in spermatogonia and primary spermatocytes but not in secondary spermatocytes and spermatids.

Its subcellular location is the cytoplasm. It is found in the nucleus. Functionally, may be involved in spermatogenesis. The chain is Cilia- and flagella-associated protein 299 from Mus musculus (Mouse).